A 156-amino-acid chain; its full sequence is ATP synthase subunit b (156 aa).

The chain crosses the membrane as a helical span at residues 3–23 (ITLTIFAQALAFAGLIWIVAT).

The protein belongs to the ATPase B chain family. F-type ATPases have 2 components, F(1) - the catalytic core - and F(0) - the membrane proton channel. F(1) has five subunits: alpha(3), beta(3), gamma(1), delta(1), epsilon(1). F(0) has three main subunits: a(1), b(2) and c(10-14). The alpha and beta chains form an alternating ring which encloses part of the gamma chain. F(1) is attached to F(0) by a central stalk formed by the gamma and epsilon chains, while a peripheral stalk is formed by the delta and b chains.

The protein localises to the cell inner membrane. Its function is as follows. F(1)F(0) ATP synthase produces ATP from ADP in the presence of a proton or sodium gradient. F-type ATPases consist of two structural domains, F(1) containing the extramembraneous catalytic core and F(0) containing the membrane proton channel, linked together by a central stalk and a peripheral stalk. During catalysis, ATP synthesis in the catalytic domain of F(1) is coupled via a rotary mechanism of the central stalk subunits to proton translocation. Functionally, component of the F(0) channel, it forms part of the peripheral stalk, linking F(1) to F(0). This is ATP synthase subunit b from Xanthomonas axonopodis pv. citri (strain 306).